Here is a 177-residue protein sequence, read N- to C-terminus: MSRVAKAPVVVPAGVDVKINGQVITIKGKNGELTRTLNDAVEVKHADNALTFGPRDGYADGWAQAGTARALLNSMVIGVTEGFTKKLQLVGVGYRAAVKGNVVNLSLGFSHPVDHQLPAGITAECPTQAEIVLKGADKQVIGQVAADLRAYRRPEPYKGKGVRYADEVVRTKEAKKK.

It belongs to the universal ribosomal protein uL6 family. In terms of assembly, part of the 50S ribosomal subunit.

Functionally, this protein binds to the 23S rRNA, and is important in its secondary structure. It is located near the subunit interface in the base of the L7/L12 stalk, and near the tRNA binding site of the peptidyltransferase center. In Salmonella dublin (strain CT_02021853), this protein is Large ribosomal subunit protein uL6.